We begin with the raw amino-acid sequence, 337 residues long: Ferrochelatase (337 aa).

2 residues coordinate Fe cation: H189 and E293.

The protein belongs to the ferrochelatase family.

It localises to the cytoplasm. The enzyme catalyses heme b + 2 H(+) = protoporphyrin IX + Fe(2+). The protein operates within porphyrin-containing compound metabolism; protoheme biosynthesis; protoheme from protoporphyrin-IX: step 1/1. In terms of biological role, catalyzes the ferrous insertion into protoporphyrin IX. This Pseudomonas entomophila (strain L48) protein is Ferrochelatase.